The sequence spans 175 residues: 3-hydroxydecanoyl-[acyl-carrier-protein] dehydratase (175 aa).

His71 is an active-site residue.

The protein belongs to the thioester dehydratase family. FabA subfamily. In terms of assembly, homodimer.

The protein localises to the cytoplasm. The enzyme catalyses a (3R)-hydroxyacyl-[ACP] = a (2E)-enoyl-[ACP] + H2O. The catalysed reaction is (3R)-hydroxydecanoyl-[ACP] = (2E)-decenoyl-[ACP] + H2O. It carries out the reaction (2E)-decenoyl-[ACP] = (3Z)-decenoyl-[ACP]. It participates in lipid metabolism; fatty acid biosynthesis. Necessary for the introduction of cis unsaturation into fatty acids. Catalyzes the dehydration of (3R)-3-hydroxydecanoyl-ACP to E-(2)-decenoyl-ACP and then its isomerization to Z-(3)-decenoyl-ACP. Can catalyze the dehydratase reaction for beta-hydroxyacyl-ACPs with saturated chain lengths up to 16:0, being most active on intermediate chain length. The protein is 3-hydroxydecanoyl-[acyl-carrier-protein] dehydratase of Rhodopseudomonas palustris (strain BisB5).